The sequence spans 156 residues: Ribosomal RNA large subunit methyltransferase H (156 aa).

2 residues coordinate S-adenosyl-L-methionine: Leu72 and Gly104.

Belongs to the RNA methyltransferase RlmH family. As to quaternary structure, homodimer.

It localises to the cytoplasm. The catalysed reaction is pseudouridine(1915) in 23S rRNA + S-adenosyl-L-methionine = N(3)-methylpseudouridine(1915) in 23S rRNA + S-adenosyl-L-homocysteine + H(+). Functionally, specifically methylates the pseudouridine at position 1915 (m3Psi1915) in 23S rRNA. The chain is Ribosomal RNA large subunit methyltransferase H from Maricaulis maris (strain MCS10) (Caulobacter maris).